A 454-amino-acid polypeptide reads, in one-letter code: Tol-Pal system protein TolB (454 aa).

A signal peptide spans 1–30; sequence MNDARSITRRRFMTLTGSGLAMLGGGHAFA.

This sequence belongs to the TolB family. The Tol-Pal system is composed of five core proteins: the inner membrane proteins TolA, TolQ and TolR, the periplasmic protein TolB and the outer membrane protein Pal. They form a network linking the inner and outer membranes and the peptidoglycan layer.

Its subcellular location is the periplasm. Part of the Tol-Pal system, which plays a role in outer membrane invagination during cell division and is important for maintaining outer membrane integrity. This is Tol-Pal system protein TolB from Bradyrhizobium diazoefficiens (strain JCM 10833 / BCRC 13528 / IAM 13628 / NBRC 14792 / USDA 110).